Consider the following 115-residue polypeptide: Large ribosomal subunit protein uL22 (115 aa).

It belongs to the universal ribosomal protein uL22 family. In terms of assembly, part of the 50S ribosomal subunit.

Functionally, this protein binds specifically to 23S rRNA; its binding is stimulated by other ribosomal proteins, e.g. L4, L17, and L20. It is important during the early stages of 50S assembly. It makes multiple contacts with different domains of the 23S rRNA in the assembled 50S subunit and ribosome. The globular domain of the protein is located near the polypeptide exit tunnel on the outside of the subunit, while an extended beta-hairpin is found that lines the wall of the exit tunnel in the center of the 70S ribosome. This Nitrosospira multiformis (strain ATCC 25196 / NCIMB 11849 / C 71) protein is Large ribosomal subunit protein uL22.